The sequence spans 714 residues: ATP-dependent DNA helicase DinG (714 aa).

The Helicase ATP-binding domain occupies 17–294; the sequence is ALQDQIPDFI…TSMEQFRPKT (278 aa). 54 to 61 lines the ATP pocket; the sequence is APTGVGKT. The [4Fe-4S] cluster site is built by Cys-120, Cys-194, Cys-199, and Cys-205. The short motif at 248-251 is the DEAH box element; the sequence is DEGH. Residues 517–698 form the Helicase C-terminal domain; the sequence is HIAEMAAYFR…VFPIEQPAVP (182 aa).

Belongs to the helicase family. DinG subfamily. Type 1 sub-subfamily. It depends on [4Fe-4S] cluster as a cofactor.

It carries out the reaction Couples ATP hydrolysis with the unwinding of duplex DNA at the replication fork by translocating in the 5'-3' direction. This creates two antiparallel DNA single strands (ssDNA). The leading ssDNA polymer is the template for DNA polymerase III holoenzyme which synthesizes a continuous strand.. The enzyme catalyses ATP + H2O = ADP + phosphate + H(+). DNA-dependent ATPase and 5'-3' DNA helicase. Unwinds D-loops, R-loops, forked DNA and G-quadruplex DNA. The sequence is that of ATP-dependent DNA helicase DinG from Salmonella choleraesuis (strain SC-B67).